We begin with the raw amino-acid sequence, 530 residues long: B3 domain-containing protein REM-like 3 (530 aa).

2 DNA-binding regions (TF-B3) span residues Lys-11–Ser-103 and Asp-144–Glu-241. Residues Ser-251 to Lys-276 form a disordered region. Over residues Val-254–Lys-276 the composition is skewed to basic and acidic residues. 2 DNA-binding regions (TF-B3) span residues Asn-296–Glu-393 and Ser-431–Lys-530.

It is found in the nucleus. This chain is B3 domain-containing protein REM-like 3, found in Arabidopsis thaliana (Mouse-ear cress).